The sequence spans 148 residues: 1,4-dihydroxy-2-naphthoyl-CoA hydrolase (148 aa).

Asp-15 is an active-site residue.

Belongs to the 4-hydroxybenzoyl-CoA thioesterase family. DHNA-CoA hydrolase subfamily.

The enzyme catalyses 1,4-dihydroxy-2-naphthoyl-CoA + H2O = 1,4-dihydroxy-2-naphthoate + CoA + H(+). It participates in cofactor biosynthesis; phylloquinone biosynthesis. It functions in the pathway quinol/quinone metabolism; 1,4-dihydroxy-2-naphthoate biosynthesis; 1,4-dihydroxy-2-naphthoate from chorismate: step 7/7. Its function is as follows. Catalyzes the hydrolysis of 1,4-dihydroxy-2-naphthoyl-CoA (DHNA-CoA) to 1,4-dihydroxy-2-naphthoate (DHNA), a reaction involved in phylloquinone (vitamin K1) biosynthesis. This is 1,4-dihydroxy-2-naphthoyl-CoA hydrolase from Nostoc sp. (strain PCC 7120 / SAG 25.82 / UTEX 2576).